The primary structure comprises 229 residues: Sperm flagellar protein 1 (229 aa).

The Calponin-homology (CH) domain maps to 7–115 (EETMQELYTW…TLRQKIEEKQ (109 aa)). Positions 122 to 169 (ADLSQDQATQNNGNTHSDKGYKSNGTELSPRQGARVDPASKTHQGYAQ) are disordered. Residues 123-136 (DLSQDQATQNNGNT) are compositionally biased toward polar residues. Positions 178–229 (RFQLAEKEQTLILSQETIQILQAKLRRLEQLLLLKNVRIDDLTRRLQELEKK) are essential for homodimerization and microtubule bundling activity.

In terms of assembly, homodimer.

The protein resides in the cytoplasm. It localises to the cytoskeleton. Its subcellular location is the cilium axoneme. The protein localises to the apical cell membrane. In terms of biological role, microtubule-associated protein involved in the stabilization of microtubules along the axis of migration during radial intercalation. Promotes the establishment and stabilization of an axis of microtubules required for the active migration of cells into the outer epithelium. Microtubule-associated protein that promotes microtubule bundling and stabilizes microtubules against depolymerization in response to cold shock. Essential for ciliary central apparatus formation which requires both its microtubule-binding and bundling activities. Regulates planar cell polarity signaling pathway and asymmetric microtubule accumulation in ciliated epithelia. This Xenopus laevis (African clawed frog) protein is Sperm flagellar protein 1.